A 432-amino-acid polypeptide reads, in one-letter code: MKKTHITEQNFADLGLQPQVIDGLNAKGFIKCTPIQAKALPVLLAGQDIAGQAQTGTGKTLAFLTATFNHLLTTPAPEGRKITQPRAIIMAPTRELAIQIFNDAESLIASTGLKAALAYGGERYEKQQQVIEQGVDILIGTTGRIIDFYKQGHIDFKMIQAVVLDEADRMFDLGFIKDIRFIFRRMPAPTERLNMLFSATLSYRVQELAFEHMQEPEHVVVEPEQKTGHRIKEELFYPSNDHKMALLQTLIEEEWPDRAIIFANTKHKCESVWGHLAADKHRVGLLTGDVPQKKRERILEEFTQGNVDILVATDVAARGLHIPQVTHVFNFDLPNEAEDYVHRIGRTGRAGASGNSISFACEEYAINLPAIEEYIEHSIPQSDYDASALLEDLPAPLRLQRRPQQNRRNNNGQRQGGNRKHSRPRQPRNTQS.

Residues 9-37 (QNFADLGLQPQVIDGLNAKGFIKCTPIQA) carry the Q motif motif. A Helicase ATP-binding domain is found at 40 to 219 (LPVLLAGQDI…FEHMQEPEHV (180 aa)). 53–60 (AQTGTGKT) is a binding site for ATP. Positions 165–168 (DEAD) match the DEAD box motif. The region spanning 245–390 (ALLQTLIEEE…QSDYDASALL (146 aa)) is the Helicase C-terminal domain. The tract at residues 397–432 (LRLQRRPQQNRRNNNGQRQGGNRKHSRPRQPRNTQS) is disordered. Residues 417–426 (GNRKHSRPRQ) show a composition bias toward basic residues.

Belongs to the DEAD box helicase family. RhlB subfamily. Component of the RNA degradosome, which is a multiprotein complex involved in RNA processing and mRNA degradation.

The protein resides in the cytoplasm. The catalysed reaction is ATP + H2O = ADP + phosphate + H(+). Its function is as follows. DEAD-box RNA helicase involved in RNA degradation. Has RNA-dependent ATPase activity and unwinds double-stranded RNA. The chain is ATP-dependent RNA helicase RhlB from Aliivibrio fischeri (strain MJ11) (Vibrio fischeri).